The chain runs to 177 residues: Thymidine kinase (177 aa).

Position 11 to 18 (11 to 18 (GPMFSGKS)) interacts with ATP. Catalysis depends on Glu83, which acts as the Proton acceptor. Position 113 (Phe113) interacts with substrate. Positions 138 and 141 each coordinate Zn(2+). 157–161 (IEIIG) is a substrate binding site. Cys170 and Cys173 together coordinate Zn(2+).

This sequence belongs to the thymidine kinase family. In terms of assembly, homotetramer. Two molecules of substrate bind to each enzyme tetramer.

The enzyme catalyses thymidine + ATP = dTMP + ADP + H(+). Its function is as follows. Phosphorylates thymidine and thymidine analogs, such as azidothymidine (AZT). Part of the salvage pathway for pyrimidine deoxyribonucleotide synthesis. The protein is Thymidine kinase (OPG101) of Vaccinia virus (strain Copenhagen) (VACV).